A 294-amino-acid chain; its full sequence is DEP domain-containing protein 4 (294 aa).

The DEP domain occupies 71 to 162 (LQAQVEIKRR…SNISLYRFLG (92 aa)).

The sequence is that of DEP domain-containing protein 4 (DEPDC4) from Homo sapiens (Human).